Here is a 245-residue protein sequence, read N- to C-terminus: Uridylate kinase (245 aa).

20–23 (KLSG) is an ATP binding site. A UMP-binding site is contributed by Gly-60. Positions 61 and 65 each coordinate ATP. UMP-binding positions include Asp-80 and 141 to 148 (AGLPYFST). ATP-binding residues include Tyr-175 and Asp-178.

This sequence belongs to the UMP kinase family. In terms of assembly, homohexamer.

It is found in the cytoplasm. It carries out the reaction UMP + ATP = UDP + ADP. The protein operates within pyrimidine metabolism; CTP biosynthesis via de novo pathway; UDP from UMP (UMPK route): step 1/1. With respect to regulation, inhibited by UTP. Its function is as follows. Catalyzes the reversible phosphorylation of UMP to UDP. The polypeptide is Uridylate kinase (Arthrobacter sp. (strain FB24)).